The chain runs to 845 residues: Aryl hydrocarbon receptor (845 aa).

Residues 1–10 (MNSSSASITY) constitute a propeptide that is removed on maturation. Polar residues predominate over residues 1–10 (MNSSSASITY). Residues 1–39 (MNSSSASITYASRKRRKPVQKTVKPVPAEGIKSNPSKRH) are disordered. 2 short sequence motifs (nuclear localization signal) span residues 13-16 (RKRR) and 37-42 (KRHRDR). Residues 27 to 80 (PAEGIKSNPSKRHRDRLNTELDRLASLLPFPQDVVNKLDKLSVLRLSVSYLRAK) form the bHLH domain. Required for maintaining the overall integrity of the AHR:ARNT heterodimer and its transcriptional activity regions lie at residues 50–82 (LASL…AKSF), 117–125 (LLQALNGFV), and 265–267 (FAI). The Nuclear export signal motif lies at 64–72 (LDKLSVLRL). The PAS 1 domain occupies 110-180 (NLQEGEFLLQ…RQLHWALNPS (71 aa)). The PAS 2 domain occupies 274-341 (PSILEIRTKN…CAEYHIRMIK (68 aa)). Residues 347–385 (LIVFRLLTKDNRWTWVQSNARLVYKNGRPDYIIATQRPL) enclose the PAC domain. Residues 820-845 (NNTQPTTHLHPSEARPFSDLTSSGFL) are disordered.

As to quaternary structure, homodimer. Heterodimer; efficient DNA binding requires dimerization with another bHLH protein. Interacts with ARNT; the heterodimer ARNT:AHR binds to core DNA sequence 5'-TGCGTG-3' within the dioxin response element (DRE) of target gene promoters and activates their transcription. Binds MYBBP1A. Interacts with coactivators including SRC-1, RIP140 and NOCA7, and with the corepressor SMRT. Interacts with NEDD8 and IVNS1ABP. Interacts with BMAL1. Interacts with HSP90AB1. Interacts with TIPARP; leading to mono-ADP-ribosylation of AHR and subsequent inhibition of AHR. Mono-ADP-ribosylated, leading to inhibit transcription activator activity of AHR.

The protein localises to the cytoplasm. It localises to the nucleus. Functionally, ligand-activated transcription factor that enables cells to adapt to changing conditions by sensing compounds from the environment, diet, microbiome and cellular metabolism, and which plays important roles in development, immunity and cancer. Upon ligand binding, translocates into the nucleus, where it heterodimerizes with ARNT and induces transcription by binding to xenobiotic response elements (XRE). Regulates a variety of biological processes, including angiogenesis, hematopoiesis, drug and lipid metabolism, cell motility and immune modulation. Xenobiotics can act as ligands: upon xenobiotic-binding, activates the expression of multiple phase I and II xenobiotic chemical metabolizing enzyme genes (such as the CYP1A1 gene). Mediates biochemical and toxic effects of halogenated aromatic hydrocarbons. Next to xenobiotics, natural ligands derived from plants, microbiota, and endogenous metabolism are potent AHR agonists. Tryptophan (Trp) derivatives constitute an important class of endogenous AHR ligands. Acts as a negative regulator of anti-tumor immunity: indoles and kynurenic acid generated by Trp catabolism act as ligand and activate AHR, thereby promoting AHR-driven cancer cell motility and suppressing adaptive immunity. Regulates the circadian clock by inhibiting the basal and circadian expression of the core circadian component PER1. Inhibits PER1 by repressing the CLOCK-BMAL1 heterodimer mediated transcriptional activation of PER1. The heterodimer ARNT:AHR binds to core DNA sequence 5'-TGCGTG-3' within the dioxin response element (DRE) of target gene promoters and activates their transcription. The polypeptide is Aryl hydrocarbon receptor (AHR) (Delphinapterus leucas (Beluga whale)).